The primary structure comprises 62 residues: Snaclec aspercetin subunit alpha (62 aa).

Cysteine 2 and cysteine 13 are oxidised to a cystine. The C-type lectin domain occupies 9–62 (YEGHCYRFFHPPKDWADAERFCTEQAKGGALVSIQRFGEEDFVSNLITKNLQRG).

This sequence belongs to the snaclec family. Heterodimer; disulfide-linked. As to expression, expressed by the venom gland.

The protein localises to the secreted. In terms of biological role, snaclec that binds to von Willebrand factor (VWF) and induces its interaction with GPIbalpha (GP1BA) (via the vWF A1 domain), resulting in platelet aggregation. Intravenous injection in mice induces a dose-dependent drop in platelet count (thrombocytopenia). Pretreatment by intravenous injection by this protein in mice potentiates the hemorrhagic lesion in the skin provoked by the metalloproteinase BaP1 intradermally injected. This result is not observed when both BaP1 and this protein are injected simultaneously. This chain is Snaclec aspercetin subunit alpha, found in Bothrops asper (Terciopelo).